The sequence spans 197 residues: Peptide deformylase (197 aa).

Fe cation is bound by residues Cys-106 and His-148. The active site involves Glu-149. A Fe cation-binding site is contributed by His-152.

Belongs to the polypeptide deformylase family. Requires Fe(2+) as cofactor.

It carries out the reaction N-terminal N-formyl-L-methionyl-[peptide] + H2O = N-terminal L-methionyl-[peptide] + formate. Its function is as follows. Removes the formyl group from the N-terminal Met of newly synthesized proteins. Requires at least a dipeptide for an efficient rate of reaction. N-terminal L-methionine is a prerequisite for activity but the enzyme has broad specificity at other positions. In Mycobacteroides abscessus (strain ATCC 19977 / DSM 44196 / CCUG 20993 / CIP 104536 / JCM 13569 / NCTC 13031 / TMC 1543 / L948) (Mycobacterium abscessus), this protein is Peptide deformylase.